The sequence spans 549 residues: CTP synthase (549 aa).

The segment at 1–267 is amidoligase domain; it reads MAKFVFITGG…CREVLDVLQL (267 aa). Ser-13 contributes to the CTP binding site. Ser-13 is a binding site for UTP. Residues 14 to 19 and Asp-71 contribute to the ATP site; that span reads SIGKGI. Positions 71 and 141 each coordinate Mg(2+). CTP contacts are provided by residues 148 to 150, 188 to 193, and Lys-224; these read DIE and KTKPTQ. UTP is bound by residues 188-193 and Lys-224; that span reads KTKPTQ. A Glutamine amidotransferase type-1 domain is found at 292–534; sequence KVALVGKYVQ…IEAAQQRLPD (243 aa). An L-glutamine-binding site is contributed by Gly-354. Cys-381 (nucleophile; for glutamine hydrolysis) is an active-site residue. L-glutamine is bound by residues 382-385, Glu-405, and Arg-462; that span reads LGMQ. Residues His-507 and Glu-509 contribute to the active site.

Belongs to the CTP synthase family. As to quaternary structure, homotetramer.

It catalyses the reaction UTP + L-glutamine + ATP + H2O = CTP + L-glutamate + ADP + phosphate + 2 H(+). The enzyme catalyses L-glutamine + H2O = L-glutamate + NH4(+). It carries out the reaction UTP + NH4(+) + ATP = CTP + ADP + phosphate + 2 H(+). It functions in the pathway pyrimidine metabolism; CTP biosynthesis via de novo pathway; CTP from UDP: step 2/2. Its activity is regulated as follows. Allosterically activated by GTP, when glutamine is the substrate; GTP has no effect on the reaction when ammonia is the substrate. The allosteric effector GTP functions by stabilizing the protein conformation that binds the tetrahedral intermediate(s) formed during glutamine hydrolysis. Inhibited by the product CTP, via allosteric rather than competitive inhibition. Functionally, catalyzes the ATP-dependent amination of UTP to CTP with either L-glutamine or ammonia as the source of nitrogen. Regulates intracellular CTP levels through interactions with the four ribonucleotide triphosphates. This chain is CTP synthase, found in Synechococcus sp. (strain CC9902).